A 299-amino-acid polypeptide reads, in one-letter code: Protease HtpX homolog (299 aa).

The next 2 membrane-spanning stretches (helical) occupy residues 15–35 (ILLL…GYLF) and 39–59 (GLGG…SMIF). Position 143 (His143) interacts with Zn(2+). Glu144 is a catalytic residue. His147 is a binding site for Zn(2+). 2 consecutive transmembrane segments (helical) span residues 158–178 (IAVA…RMMW) and 198–218 (IIML…ATLV). Glu227 lines the Zn(2+) pocket.

Belongs to the peptidase M48B family. Zn(2+) is required as a cofactor.

Its subcellular location is the cell membrane. The chain is Protease HtpX homolog from Streptococcus pneumoniae serotype 19F (strain G54).